The chain runs to 708 residues: DNA ligase (708 aa).

NAD(+)-binding positions include aspartate 35 to aspartate 39, serine 84 to leucine 85, and glutamate 118. Catalysis depends on lysine 120, which acts as the N6-AMP-lysine intermediate. Residues arginine 141, glutamate 182, lysine 303, and lysine 327 each coordinate NAD(+). 4 residues coordinate Zn(2+): cysteine 419, cysteine 422, cysteine 437, and cysteine 443. The 81-residue stretch at threonine 628–glutamine 708 folds into the BRCT domain.

Belongs to the NAD-dependent DNA ligase family. LigA subfamily. The cofactor is Mg(2+). It depends on Mn(2+) as a cofactor.

The enzyme catalyses NAD(+) + (deoxyribonucleotide)n-3'-hydroxyl + 5'-phospho-(deoxyribonucleotide)m = (deoxyribonucleotide)n+m + AMP + beta-nicotinamide D-nucleotide.. In terms of biological role, DNA ligase that catalyzes the formation of phosphodiester linkages between 5'-phosphoryl and 3'-hydroxyl groups in double-stranded DNA using NAD as a coenzyme and as the energy source for the reaction. It is essential for DNA replication and repair of damaged DNA. The protein is DNA ligase of Rhizorhabdus wittichii (strain DSM 6014 / CCUG 31198 / JCM 15750 / NBRC 105917 / EY 4224 / RW1) (Sphingomonas wittichii).